The sequence spans 114 residues: Iron-sulfur cluster insertion protein ErpA (114 aa).

Iron-sulfur cluster contacts are provided by C42, C106, and C108.

It belongs to the HesB/IscA family. Homodimer. The cofactor is iron-sulfur cluster.

Required for insertion of 4Fe-4S clusters for at least IspG. This is Iron-sulfur cluster insertion protein ErpA from Wigglesworthia glossinidia brevipalpis.